The primary structure comprises 673 residues: Armadillo repeat-containing protein 8 (673 aa).

ARM repeat units follow at residues 51–92 (NKQK…SLSM), 95–134 (ENNI…TVFI), 138–176 (TPVQ…HCCK), 178–217 (PEHQ…VLAY), 225–265 (TLVN…YMCR), 269–309 (IRTE…YLME), 313–352 (ELQR…HDLK), 374–413 (DIRK…SLSR), 416–455 (QQLR…NLLL), 458–497 (SPSK…NMAF), 501–540 (QKVK…NLLS), 543–585 (PHID…NIAD), 588–627 (TAKE…NLIW), and 634–673 (QERQ…QYLA).

In terms of assembly, identified in the CTLH complex that contains at least MAEA, RMND5A (or alternatively its paralog RMND5B), GID8, WDR26, and RANBP9 and/or RANBP10; ARMC8 has an ancillary role in the complex.

The protein resides in the nucleus. The protein localises to the cytoplasm. Its function is as follows. Component of the CTLH E3 ubiquitin-protein ligase complex that mediates ubiquitination and subsequent proteasomal degradation of target proteins. The chain is Armadillo repeat-containing protein 8 (armc8) from Danio rerio (Zebrafish).